Reading from the N-terminus, the 887-residue chain is 3-hydroxy-3-methylglutaryl-coenzyme A reductase (887 aa).

The Cytoplasmic segment spans residues 1–9 (MLSRLFRMH). A helical membrane pass occupies residues 10 to 39 (GLFVASHPWEVIVGTVTLTICMMSMNMFTG). The Lumenal segment spans residues 40–56 (NNKICGWNYECPKFEED). A helical membrane pass occupies residues 57-78 (VLSSDIIILTITRCIAILYIYF). The SSD domain occupies 61-218 (DIIILTITRC…MTFFPACVSL (158 aa)). An INSIG-binding motif motif is present at residues 75–78 (YIYF). Topologically, residues 79–89 (QFQNLRQLGSK) are cytoplasmic. Residue lysine 89 forms a Glycyl lysine isopeptide (Lys-Gly) (interchain with G-Cter in ubiquitin) linkage. The chain crosses the membrane as a helical span at residues 90 to 114 (YILGIAGLFTIFSSFVFSTVVIHFL). Over 115–123 (DKELTGLNE) the chain is Lumenal. The chain crosses the membrane as a helical span at residues 124–149 (ALPFFLLLIDLSRASALAKFALSSNS). At 150–159 (QDEVRENIAR) the chain is on the cytoplasmic side. Residues 160–187 (GMAILGPTFTLDALVECLVIGVGTMSGV) traverse the membrane as a helical segment. At 188–191 (RQLE) the chain is on the lumenal side. Residues 192-220 (IMCCFGCMSVLANYFVFMTFFPACVSLVL) form a helical membrane-spanning segment. The Cytoplasmic portion of the chain corresponds to 221–248 (ELSRESREGRPIWQLSHFARVLEEEENK). Lysine 248 participates in a covalent cross-link: Glycyl lysine isopeptide (Lys-Gly) (interchain with G-Cter in ubiquitin). Residues 249–275 (PNPVTQRVKMIMSLGLVLVHAHSRWIA) form a helical membrane-spanning segment. The Lumenal portion of the chain corresponds to 276 to 314 (DPSPQNSTTEHSKVSLGLDEDVSKRIEPSVSLWQFYLSK). Asparagine 281 is a glycosylation site (N-linked (GlcNAc...) asparagine). A helical membrane pass occupies residues 315 to 339 (MISMDIEQVVTLSLAFLLAVKYIFF). The Cytoplasmic portion of the chain corresponds to 340 to 887 (EQAETESTLS…LQGTCTKKSA (548 aa)). Residues glutamate 558, lysine 690, and aspartate 766 each act as charge relay system in the active site. Catalysis depends on histidine 865, which acts as the Proton donor. The residue at position 871 (serine 871) is a Phosphoserine; by AMPK.

This sequence belongs to the HMG-CoA reductase family. In terms of assembly, homotetramer. Homodimer. Interacts (via its SSD) with INSIG1; the interaction, accelerated by sterols, leads to the recruitment of HMGCR to AMFR/gp78 for its ubiquitination by the sterol-mediated ERAD pathway. Interacts with UBIAD1. Post-translationally, N-glycosylated. Glycosylated with high mannose chains including Man(6)(GlcNAc)(2), Man(7)(GlcNAc)(2) and Man(8)(GlcNAc)(2). Deglycosylated by NGLY1 on release from the endoplasmic reticulum (ER) in a sterol-mediated manner. Undergoes sterol-mediated ubiquitination and ER-associated degradation (ERAD). Accumulation of sterols in the endoplasmic reticulum (ER) membrane, triggers binding of the reductase to the ER membrane protein INSIG1 or INSIG2. The INSIG1 binding leads to the recruitment of the ubiquitin ligase, AMFR/gp78, RNF139 or RNF145, initiating ubiquitination of the reductase. The ubiquitinated reductase is then extracted from the ER membrane and delivered to cytosolic 26S proteosomes by a mechanism probably mediated by the ATPase Valosin-containing protein VCP/p97. The INSIG2-binding leads to the recruitment of the ubiquitin ligase RNF139, initiating ubiquitination of the reductase. Lys-248 is the main site of ubiquitination. Ubiquitination is enhanced by the presence of a geranylgeranylated protein. In terms of processing, phosphorylated. Phosphorylation at Ser-871 reduces the catalytic activity.

The protein localises to the endoplasmic reticulum membrane. It is found in the peroxisome membrane. The enzyme catalyses (R)-mevalonate + 2 NADP(+) + CoA = (3S)-3-hydroxy-3-methylglutaryl-CoA + 2 NADPH + 2 H(+). It participates in metabolic intermediate biosynthesis; (R)-mevalonate biosynthesis; (R)-mevalonate from acetyl-CoA: step 3/3. With respect to regulation, regulated by a negative feedback mechanism through sterols and non-sterol metabolites derived from mevalonate. Phosphorylation at Ser-871 down-regulates the catalytic activity. Its function is as follows. Catalyzes the conversion of (3S)-hydroxy-3-methylglutaryl-CoA (HMG-CoA) to mevalonic acid, the rate-limiting step in the synthesis of cholesterol and other isoprenoids, thus plays a critical role in cellular cholesterol homeostasis. The polypeptide is 3-hydroxy-3-methylglutaryl-coenzyme A reductase (HMGCR) (Cricetulus griseus (Chinese hamster)).